The following is a 632-amino-acid chain: Polyadenylate-binding protein, cytoplasmic and nuclear (632 aa).

Positions 1–11 (MSAADANQLQE) are enriched in polar residues. The segment at 1–43 (MSAADANQLQESLEKLNLDSAPAAAEEEAVAAESAPAGEEGAD) is disordered. The span at 31-43 (AAESAPAGEEGAD) shows a compositional bias: low complexity. RRM domains follow at residues 52–130 (ASLY…WSQR), 140–217 (GNIF…KHIS), 233–310 (TNIY…RAQK), and 336–413 (VNLF…LAQR). A PABC domain is found at 534 to 615 (QQRDLAAIIA…ALTAFEEYKN (82 aa)).

The protein belongs to the polyadenylate-binding protein type-1 family.

It localises to the cytoplasm. The protein localises to the nucleus. Functionally, binds the poly(A) tail of mRNA. Appears to be an important mediator of the multiple roles of the poly(A) tail in mRNA biogenesis, stability and translation. In the nucleus, involved in both mRNA cleavage and polyadenylation. Is also required for efficient mRNA export to the cytoplasm. Acts in concert with a poly(A)-specific nuclease (PAN) to affect poly(A) tail shortening, which may occur concomitantly with either nucleocytoplasmic mRNA transport or translational initiation. In the cytoplasm, stimulates translation initiation and regulates mRNA decay through translation termination-coupled poly(A) shortening, probably mediated by PAN. The chain is Polyadenylate-binding protein, cytoplasmic and nuclear (PAB1) from Scheffersomyces stipitis (strain ATCC 58785 / CBS 6054 / NBRC 10063 / NRRL Y-11545) (Yeast).